We begin with the raw amino-acid sequence, 286 residues long: Pyridoxal kinase PdxY (286 aa).

Substrate is bound by residues Ser9 and 44 to 45 (TQ). Residues Asp111, Ala143, Glu148, Lys181, and 208–211 (RPLV) contribute to the ATP site. Residue Asp223 participates in substrate binding.

Belongs to the pyridoxine kinase family. PdxY subfamily. Homodimer. Mg(2+) is required as a cofactor.

It catalyses the reaction pyridoxal + ATP = pyridoxal 5'-phosphate + ADP + H(+). Its pathway is cofactor metabolism; pyridoxal 5'-phosphate salvage; pyridoxal 5'-phosphate from pyridoxal: step 1/1. Functionally, pyridoxal kinase involved in the salvage pathway of pyridoxal 5'-phosphate (PLP). Catalyzes the phosphorylation of pyridoxal to PLP. The protein is Pyridoxal kinase PdxY of Salmonella paratyphi A (strain ATCC 9150 / SARB42).